We begin with the raw amino-acid sequence, 207 residues long: Uridine kinase (207 aa).

11-18 (GGSGSGKT) contacts ATP.

This sequence belongs to the uridine kinase family.

It localises to the cytoplasm. The enzyme catalyses uridine + ATP = UMP + ADP + H(+). The catalysed reaction is cytidine + ATP = CMP + ADP + H(+). The protein operates within pyrimidine metabolism; CTP biosynthesis via salvage pathway; CTP from cytidine: step 1/3. Its pathway is pyrimidine metabolism; UMP biosynthesis via salvage pathway; UMP from uridine: step 1/1. This is Uridine kinase from Staphylococcus epidermidis (strain ATCC 35984 / DSM 28319 / BCRC 17069 / CCUG 31568 / BM 3577 / RP62A).